Consider the following 574-residue polypeptide: Septation ring formation regulator EzrA (574 aa).

At Met1 to Leu7 the chain is on the extracellular side. A helical membrane pass occupies residues Leu8 to Ile26. The Cytoplasmic segment spans residues Arg27–Phe574. Coiled coils occupy residues Asn102–Leu131, Glu161–Leu190, Val276–Lys379, and Gln459–Glu493.

This sequence belongs to the EzrA family.

It localises to the cell membrane. In terms of biological role, negative regulator of FtsZ ring formation; modulates the frequency and position of FtsZ ring formation. Inhibits FtsZ ring formation at polar sites. Interacts either with FtsZ or with one of its binding partners to promote depolymerization. This Streptococcus equi subsp. zooepidemicus (strain H70) protein is Septation ring formation regulator EzrA.